We begin with the raw amino-acid sequence, 337 residues long: Phosphoribosylformylglycinamidine cyclo-ligase (337 aa).

It belongs to the AIR synthase family.

It localises to the cytoplasm. The enzyme catalyses 2-formamido-N(1)-(5-O-phospho-beta-D-ribosyl)acetamidine + ATP = 5-amino-1-(5-phospho-beta-D-ribosyl)imidazole + ADP + phosphate + H(+). It functions in the pathway purine metabolism; IMP biosynthesis via de novo pathway; 5-amino-1-(5-phospho-D-ribosyl)imidazole from N(2)-formyl-N(1)-(5-phospho-D-ribosyl)glycinamide: step 2/2. The chain is Phosphoribosylformylglycinamidine cyclo-ligase from Gloeobacter violaceus (strain ATCC 29082 / PCC 7421).